The sequence spans 117 residues: Large ribosomal subunit protein bL20c (117 aa).

Belongs to the bacterial ribosomal protein bL20 family.

It localises to the plastid. The protein resides in the chloroplast. Functionally, binds directly to 23S ribosomal RNA and is necessary for the in vitro assembly process of the 50S ribosomal subunit. It is not involved in the protein synthesizing functions of that subunit. The chain is Large ribosomal subunit protein bL20c from Populus trichocarpa (Western balsam poplar).